Consider the following 186-residue polypeptide: uncharacterized protein (186 aa).

N-linked (GlcNAc...) asparagine; by host glycosylation occurs at N34. 3 helical membrane passes run 47–67, 114–134, and 144–164; these read IGMV…ATTF, ILET…IVLL, and LEMI…TLFF.

The protein localises to the membrane. This is an uncharacterized protein from Acanthamoeba polyphaga mimivirus (APMV).